A 1916-amino-acid chain; its full sequence is Endoribonuclease Dicer (1916 aa).

Residues 51 to 227 (LLEAALDHNT…ELEEKIQKLE (177 aa)) enclose the Helicase ATP-binding domain. Residue 64–71 (LNTGSGKT) participates in ATP binding. Residues 175 to 178 (DECH) carry the DECH box motif. The segment at 256–595 (DCGPFTDRSG…LRNKCSKSAD (340 aa)) is required for interaction with PRKRA and TARBP2. The disordered stretch occupies residues 409–433 (YVSWSDSEDDDDDEEIEEKEKPETN). Phosphoserine is present on residues Ser-413 and Ser-415. Positions 414 to 425 (DSEDDDDDEEIE) are enriched in acidic residues. One can recognise a Helicase C-terminal domain in the interval 433–602 (NFPSPFTNIL…SADGAEADVH (170 aa)). Residues 630 to 722 (AIGHINRYCA…MPVGKETVKY (93 aa)) enclose the Dicer dsRNA-binding fold domain. The segment at 726–745 (LDLHDEEETSVPGRPGSTKR) is disordered. The region spanning 895–1042 (KFMEDIEKSE…LVPELCAIHP (148 aa)) is the PAZ domain. Phosphoserine occurs at positions 1016 and 1160. The RNase III 1 domain occupies 1276-1403 (DSEQSPSVGY…SEKWEKDEMT (128 aa)). Residues Glu-1316, Glu-1395, and Glu-1398 each contribute to the Mg(2+) site. Phosphoserine occurs at positions 1456, 1464, and 1466. The disordered stretch occupies residues 1598–1626 (ALDPAQENGSSQQKSLSGSCAAPVGPRSS). Residues 1604 to 1615 (ENGSSQQKSLSG) show a composition bias toward polar residues. An RNase III 2 domain is found at 1660–1818 (FETFEKKINY…LAGAIYMDSG (159 aa)). Mg(2+) is bound by residues Glu-1699, Asp-1804, and Glu-1807. The region spanning 1843 to 1908 (VPRSPVRELL…ARRALRSLKA (66 aa)) is the DRBM domain. Ser-1862 carries the phosphoserine modification.

Belongs to the helicase family. Dicer subfamily. In terms of assembly, component of the RISC loading complex (RLC), or micro-RNA (miRNA) loading complex (miRLC), which is composed of DICER1, AGO2 and TARBP2; DICER1 and TARBP2 are required to process precursor miRNAs (pre-miRNAs) to mature miRNAs and then load them onto AGO2. Note that the trimeric RLC/miRLC is also referred to as RISC. Interacts with DHX9, AGO1, PIWIL1 and PRKRA. Interacts with AGO2, TARBP2, EIF6, MOV10 and RPL7A (60S ribosome subunit); they form a large RNA-induced silencing complex (RISC). Interacts with BCDIN3D. Interacts (via Dicer dsRNA-binding fold domain) with ALOX5 (via PLAT domain); this interaction enhances arachidonate 5-lipoxygenase activity and modifies the miRNA precursor processing activity of DICER1. Requires Mg(2+) as cofactor. Mn(2+) serves as cofactor. Isoform 1 is expressed in a wide variety of tissues. Isoform 2 is specifically expressed in oocytes during their growth (at protein level).

The protein resides in the cytoplasm. It catalyses the reaction Endonucleolytic cleavage to 5'-phosphomonoester.. Double-stranded RNA (dsRNA) endoribonuclease playing a central role in short dsRNA-mediated post-transcriptional gene silencing. Cleaves naturally occurring long dsRNAs and short hairpin pre-microRNAs (miRNA) into fragments of twenty-one to twenty-three nucleotides with 3' overhang of two nucleotides, producing respectively short interfering RNAs (siRNA) and mature microRNAs. SiRNAs and miRNAs serve as guide to direct the RNA-induced silencing complex (RISC) to complementary RNAs to degrade them or prevent their translation. Gene silencing mediated by siRNAs, also called RNA interference, controls the elimination of transcripts from mobile and repetitive DNA elements of the genome but also the degradation of exogenous RNA of viral origin for instance. The miRNA pathway on the other side is a mean to specifically regulate the expression of target genes. In terms of biological role, more active than isoform 1 to process long double-stranded RNA into siRNAs. Responsible for the accumulation of endogenous siRNAs observed in mouse oocytes compared to somatic cells and it regulates meiotic spindle organization in female germline. This Mus musculus (Mouse) protein is Endoribonuclease Dicer (Dicer1).